The following is a 326-amino-acid chain: ATP phosphoribosyltransferase regulatory subunit (326 aa).

It belongs to the class-II aminoacyl-tRNA synthetase family. HisZ subfamily. As to quaternary structure, heteromultimer composed of HisG and HisZ subunits.

The protein localises to the cytoplasm. The protein operates within amino-acid biosynthesis; L-histidine biosynthesis; L-histidine from 5-phospho-alpha-D-ribose 1-diphosphate: step 1/9. Its function is as follows. Required for the first step of histidine biosynthesis. May allow the feedback regulation of ATP phosphoribosyltransferase activity by histidine. This Streptococcus thermophilus (strain ATCC BAA-491 / LMD-9) protein is ATP phosphoribosyltransferase regulatory subunit.